The sequence spans 108 residues: Thiosulfate sulfurtransferase GlpE (108 aa).

A Rhodanese domain is found at 18-106 (ENEGATLADI…WERSGLPIET (89 aa)). Cys-66 functions as the Cysteine persulfide intermediate in the catalytic mechanism.

The protein belongs to the GlpE family.

The protein resides in the cytoplasm. It catalyses the reaction thiosulfate + hydrogen cyanide = thiocyanate + sulfite + 2 H(+). It carries out the reaction thiosulfate + [thioredoxin]-dithiol = [thioredoxin]-disulfide + hydrogen sulfide + sulfite + 2 H(+). Transferase that catalyzes the transfer of sulfur from thiosulfate to thiophilic acceptors such as cyanide or dithiols. May function in a CysM-independent thiosulfate assimilation pathway by catalyzing the conversion of thiosulfate to sulfite, which can then be used for L-cysteine biosynthesis. This is Thiosulfate sulfurtransferase GlpE from Actinobacillus pleuropneumoniae serotype 5b (strain L20).